A 102-amino-acid polypeptide reads, in one-letter code: Thioredoxin (102 aa).

A Thioredoxin domain is found at 1 to 102; that stretch reads MVKIISSENF…FLTNLINKHA (102 aa). A disulfide bridge connects residues C28 and C31.

This sequence belongs to the thioredoxin family.

Participates in various redox reactions through the reversible oxidation of its active center dithiol to a disulfide and catalyzes dithiol-disulfide exchange reactions. The chain is Thioredoxin (trxA) from Chlamydia pneumoniae (Chlamydophila pneumoniae).